Here is a 232-residue protein sequence, read N- to C-terminus: U-scoloptoxin(11)-Sa3a (232 aa).

An N-terminal signal peptide occupies residues 1–21; the sequence is MFQFCLLILLLAPGRFFSALG.

This sequence belongs to the scoloptoxin-11 family. In terms of processing, contains 8 disulfide bonds. Expressed by the venom gland.

The protein resides in the secreted. The polypeptide is U-scoloptoxin(11)-Sa3a (Scolopendra alternans (Florida Keys giant centipede)).